A 1012-amino-acid chain; its full sequence is Ankyrin repeat- and BTB/POZ domain-containing protein 3-B (1012 aa).

A helical transmembrane segment spans residues 160–180 (ILSWTISVNCIAASLSALSMY). 3 ANK repeats span residues 511-540 (QGMT…DINS), 557-586 (RQAT…NVEG), and 595-624 (YTET…DPMI). The region spanning 831–897 (SDVTFLVEGK…LYCGGTDALH (67 aa)) is the BTB domain.

It is found in the membrane. In Danio rerio (Zebrafish), this protein is Ankyrin repeat- and BTB/POZ domain-containing protein 3-B (abtb3b).